Reading from the N-terminus, the 200-residue chain is Male-specific histamine-binding salivary protein (200 aa).

The N-terminal stretch at 1 to 18 (MKVLLLVLGAALCQNADA) is a signal peptide. Serine 37, aspartate 41, aspartate 56, and tryptophan 59 together coordinate histamine. 2 disulfides stabilise this stretch: cysteine 65–cysteine 193 and cysteine 137–cysteine 169. Asparagine 79 carries N-linked (GlcNAc...) asparagine glycosylation. 6 residues coordinate histamine: glutamate 97, tyrosine 115, phenylalanine 125, aspartate 138, glutamate 154, and tryptophan 156.

This sequence belongs to the calycin superfamily. Histamine-binding salivary protein family. Homodimer; disulcde-linked. N-glycosylated. In terms of tissue distribution, expressed in salivary glands.

The protein localises to the secreted. Its function is as follows. Salivary tick protein that acts by scavenging histamine at the wound site, outcompeting histamine receptors for histamine, thereby overcoming host inflammatory responses. Binds histamine with a high-affinity (Kd=1.2 nM). Contains two binding histamine sites (H and L), that appear to bind histamine with differing affinities. This Rhipicephalus appendiculatus (Brown ear tick) protein is Male-specific histamine-binding salivary protein.